Consider the following 130-residue polypeptide: Large ribosomal subunit protein eL22 (130 aa).

Belongs to the eukaryotic ribosomal protein eL22 family.

This is Large ribosomal subunit protein eL22 (rpl-22) from Caenorhabditis elegans.